The chain runs to 397 residues: Penicillopepsin-1 (397 aa).

Residues 1-20 form the signal peptide; it reads MVVFSQVTVALTCFSAIASA. The propeptide at 21-71 is activation peptide; the sequence is AAVRQEPPQGFTVNQVQKAVPGTRTVNLPGLYANALVKYGATVPATVHAAA. Residues 87–394 enclose the Peptidase A1 domain; that stretch reads YLTPVTIGSS…DSEGPRLGFA (308 aa). Residues Asp-103 and Asp-285 contribute to the active site. An N-linked (GlcNAc...) asparagine glycan is attached at Asn-311. A disulfide bond links Cys-322 and Cys-357.

The protein belongs to the peptidase A1 family. Monomer.

Its subcellular location is the secreted. It carries out the reaction Hydrolysis of proteins with broad specificity similar to that of pepsin A, preferring hydrophobic residues at P1 and P1', but also cleaving 20-Gly-|-Glu-21 in the B chain of insulin. Clots milk, and activates trypsinogen.. Its function is as follows. Secreted aspartic endopeptidase that allows assimilation of proteinaceous substrates. The scissile peptide bond is attacked by a nucleophilic water molecule activated by two aspartic residues in the active site. Shows a broad primary substrate specificity. Favors hydrophobic residues at the P1 and P1' positions, but can also activate trypsinogen and hydrolyze the B chain of insulin between positions 'Gly-20' and 'Glu-21'. The polypeptide is Penicillopepsin-1 (Penicillium roqueforti).